The following is a 2042-amino-acid chain: Protein mini spindles (2042 aa).

TOG stretches follow at residues 1–229 (MAED…VEPS) and 267–505 (MDLL…KVAG). A binds tubulin region spans residues 1-505 (MAEDTEYKKL…KAEIKIKVAG (505 aa)). Promotes microtubule polymerization stretches follow at residues 1–516 (MAED…ASAP) and 581–1080 (TPEE…EKAR). HEAT repeat units lie at residues 120-157 (EKQE…EFGH), 160-197 (IGVK…WIGA), 270-311 (LDPV…DHPK), 315-353 (GEYG…GLAK), 357-394 (NYAS…STSL), 396-433 (AQQE…TALN), and 440-478 (LTTS…VTPL). Residues 498–821 (EIKIKVAGPK…PKPVRGVQRS (324 aa)) are association with microtubule lattice. Residues 506–572 (PKKETRPASA…PTAALKAGGK (67 aa)) form a disordered region. Low complexity predominate over residues 513-531 (ASAPTAKAAAPAKTVAGSV). The interval 581–814 (TPEELQEKSE…KNVGEKPPKP (234 aa)) is TOG 3. 4 HEAT repeats span residues 587–624 (EKSE…SGFD), 625–662 (AKQA…IIRS), 672–710 (TTVD…LEYV), and 745–782 (LQPK…YMGK). Positions 804–849 (DKNVGEKPPKPVRGVQRSSGGTAGNSPDNEDDDGGAAGEEEPINMA) are disordered. Residues 819–830 (QRSSGGTAGNSP) are compositionally biased toward polar residues. Over residues 831–845 (DNEDDDGGAAGEEEP) the composition is skewed to acidic residues. TOG stretches follow at residues 849–1087 (ADLL…PVKP) and 1179–1415 (TELL…KPTP). HEAT repeat units lie at residues 856–893 (DIAP…EARL), 896–933 (PSIG…AMGA), 937–974 (NHVR…KGGY), and 1017–1054 (EDIH…HLGF). Positions 1083 to 1140 (LPVKPLPKGKHQAPIPEEPKLKTVRGGGAGGAPGIQKSATARVAGGQDKQVPARKKDE) are disordered. The segment at 1099–1428 (EEPKLKTVRG…VDVPAPQRHD (330 aa)) is association with microtubule lattice. HEAT repeat units lie at residues 1205 to 1242 (RYHL…RFYD), 1272 to 1309 (NEGS…VFPF), 1311 to 1344 (KVFG…SYGM), and 1346 to 1383 (ICPQ…LSGE). 2 disordered regions span residues 1407 to 1455 (AKKT…TFDQ) and 1940 to 1959 (NAGS…NGPD). Positions 1940–1957 (NAGSTQDNRTDVNYQNNG) are enriched in polar residues.

The protein belongs to the TOG/XMAP215 family. Interacts with tacc, dgt6. Interacts with mv. Interacts with Patronin.

The protein localises to the cytoplasm. It localises to the cytoskeleton. It is found in the microtubule organizing center. Its subcellular location is the centrosome. The protein resides in the spindle. The protein localises to the perinuclear region. Binds to the plus end of microtubules and regulates microtubule dynamics and microtubule organization. Function in neurons is essential for adult survival, and is important for climbing behavior and activity. Promotes cytoplasmic microtubule nucleation and elongation. May act as a microtubule antipause factor that rapidly catalyzes the transition from pause to either growth or shrinkage. Involved in mitotic spindle elongation. Involved in the establishment of cell polarity and mitotic spindle orientation in neuroblasts. Required for maintaining the bipolarity of acentrosomal meiotic spindles; the function is dependent on tacc and involves ncd. Involved in oocyte microtubule cytoskeleton organization and bicoid mRNA localization. Seems to be involved in elongation of kinetochore-derived microtubule fibers. In fat body cells, essential component of perinuclear non-centrosomal microtubule-organizing centers (ncMTOCs) which function to accommodate the organization of microtubule (MT) networks to control nuclear positioning and dynein motor-based retrograde endosomal trafficking. Within the ncMTOCs, Msp300 and shot anchors the ncMTOC at the nuclear surface and recruits the MT minus-end regulators Patronin and Nin for assembly, anchoring and/or stabilization of circumferential and radial MTs at the ncMTOCs. Patronin, and perhaps Nin, then recruits msps to the ncMTOC where it is required for the gamma-tubulin-independent elongation and assembly of radial MTs. This Drosophila melanogaster (Fruit fly) protein is Protein mini spindles (msps).